Consider the following 221-residue polypeptide: Growth hormone-releasing peptides (221 aa).

The signal sequence occupies residues 1-25 (MHLKIGTLTIRTIMLFTLCTFLTLF). Positions 26–95 (AFSTCFDETK…QPENEFLQER (70 aa)) are excised as a propeptide. F107 carries the post-translational modification Phenylalanine amide. The propeptide occupies 110 to 127 (TSDDKIAKSIPSFDKIAK). Phenylalanine amide is present on residues F136, F156, and F176. A propeptide spanning residues 179–221 (TPHSDRLQYEMNSHPLELKNPEEDSDRKKRQAMTFRIRTDLQM) is cleaved from the precursor.

Belongs to the FARP (FMRFamide related peptide) family. In terms of tissue distribution, observed in the suprachiasmatic nucleus and in several telencephalic and diencephalic regions.

The protein resides in the secreted. Its function is as follows. Primary role is to release GH from the pituitary. May act as an endogenous ligand in the bullfrog hypothalamo-hypophysial system. The polypeptide is Growth hormone-releasing peptides (Aquarana catesbeiana (American bullfrog)).